The chain runs to 344 residues: N-acetyl-gamma-glutamyl-phosphate reductase (344 aa).

Residue Cys149 is part of the active site.

It belongs to the NAGSA dehydrogenase family. Type 1 subfamily.

It localises to the cytoplasm. The enzyme catalyses N-acetyl-L-glutamate 5-semialdehyde + phosphate + NADP(+) = N-acetyl-L-glutamyl 5-phosphate + NADPH + H(+). It functions in the pathway amino-acid biosynthesis; L-arginine biosynthesis; N(2)-acetyl-L-ornithine from L-glutamate: step 3/4. In terms of biological role, catalyzes the NADPH-dependent reduction of N-acetyl-5-glutamyl phosphate to yield N-acetyl-L-glutamate 5-semialdehyde. The sequence is that of N-acetyl-gamma-glutamyl-phosphate reductase from Halorhodospira halophila (strain DSM 244 / SL1) (Ectothiorhodospira halophila (strain DSM 244 / SL1)).